The primary structure comprises 154 residues: Cyclin-dependent protein kinase inhibitor SMR11 (154 aa).

The segment at M1–I44 is disordered. A compositionally biased stretch (low complexity) spans P27–S38.

In terms of assembly, interacts with CYCB2-4.

In terms of biological role, probable cyclin-dependent protein kinase (CDK) inhibitor that functions as a repressor of mitosis in the endoreduplication cell cycle. The sequence is that of Cyclin-dependent protein kinase inhibitor SMR11 from Arabidopsis thaliana (Mouse-ear cress).